We begin with the raw amino-acid sequence, 55 residues long: Large ribosomal subunit protein bL33 (55 aa).

The protein belongs to the bacterial ribosomal protein bL33 family.

The chain is Large ribosomal subunit protein bL33 from Edwardsiella ictaluri (strain 93-146).